A 219-amino-acid chain; its full sequence is Cytidylate kinase (219 aa).

Position 21–29 (21–29 (GPAASGKGT)) interacts with ATP.

It belongs to the cytidylate kinase family. Type 1 subfamily.

It localises to the cytoplasm. It carries out the reaction CMP + ATP = CDP + ADP. The enzyme catalyses dCMP + ATP = dCDP + ADP. This is Cytidylate kinase from Rickettsia prowazekii (strain Madrid E).